A 532-amino-acid polypeptide reads, in one-letter code: Putative cysteine ligase BshC (532 aa).

The stretch at 431-451 forms a coiled coil; it reads MAQAKDALAKVDASLVEAAER.

It belongs to the BshC family.

The sequence is that of Putative cysteine ligase BshC from Koribacter versatilis (strain Ellin345).